Reading from the N-terminus, the 500-residue chain is Lysine--tRNA ligase (500 aa).

Positions 410 and 417 each coordinate Mg(2+).

The protein belongs to the class-II aminoacyl-tRNA synthetase family. Homodimer. Mg(2+) serves as cofactor.

The protein resides in the cytoplasm. It carries out the reaction tRNA(Lys) + L-lysine + ATP = L-lysyl-tRNA(Lys) + AMP + diphosphate. The polypeptide is Lysine--tRNA ligase (Pseudomonas fluorescens (strain ATCC BAA-477 / NRRL B-23932 / Pf-5)).